The primary structure comprises 660 residues: Bifunctional polymyxin resistance protein ArnA (660 aa).

Residues 1-304 form a formyltransferase ArnAFT region; the sequence is MKAVIFAYHD…TLGLVAGARL (304 aa). His104 serves as the catalytic Proton donor; for formyltransferase activity. (6R)-10-formyltetrahydrofolate-binding positions include Arg114 and 136–140; that span reads VKRAD. Residues 314-660 are dehydrogenase ArnADH; that stretch reads RRIRVLILGV…RSVDVAERAS (347 aa). NAD(+) is bound by residues Asp347 and 368 to 369; that span reads DI. UDP-alpha-D-glucuronate is bound by residues Ala393, Tyr398, and 432–433; that span reads TS. Glu434 serves as the catalytic Proton acceptor; for decarboxylase activity. Residues Arg460, Asn492, 526 to 535, and Tyr613 each bind UDP-alpha-D-glucuronate; that span reads KLIDGGQQKR. Residue Arg619 is the Proton donor; for decarboxylase activity of the active site.

The protein in the N-terminal section; belongs to the Fmt family. UDP-L-Ara4N formyltransferase subfamily. It in the C-terminal section; belongs to the NAD(P)-dependent epimerase/dehydratase family. UDP-glucuronic acid decarboxylase subfamily. As to quaternary structure, homohexamer, formed by a dimer of trimers.

It carries out the reaction UDP-alpha-D-glucuronate + NAD(+) = UDP-beta-L-threo-pentopyranos-4-ulose + CO2 + NADH. The catalysed reaction is UDP-4-amino-4-deoxy-beta-L-arabinose + (6R)-10-formyltetrahydrofolate = UDP-4-deoxy-4-formamido-beta-L-arabinose + (6S)-5,6,7,8-tetrahydrofolate + H(+). It participates in nucleotide-sugar biosynthesis; UDP-4-deoxy-4-formamido-beta-L-arabinose biosynthesis; UDP-4-deoxy-4-formamido-beta-L-arabinose from UDP-alpha-D-glucuronate: step 1/3. Its pathway is nucleotide-sugar biosynthesis; UDP-4-deoxy-4-formamido-beta-L-arabinose biosynthesis; UDP-4-deoxy-4-formamido-beta-L-arabinose from UDP-alpha-D-glucuronate: step 3/3. It functions in the pathway bacterial outer membrane biogenesis; lipopolysaccharide biosynthesis. Functionally, bifunctional enzyme that catalyzes the oxidative decarboxylation of UDP-glucuronic acid (UDP-GlcUA) to UDP-4-keto-arabinose (UDP-Ara4O) and the addition of a formyl group to UDP-4-amino-4-deoxy-L-arabinose (UDP-L-Ara4N) to form UDP-L-4-formamido-arabinose (UDP-L-Ara4FN). The modified arabinose is attached to lipid A and is required for resistance to polymyxin and cationic antimicrobial peptides. In Salmonella newport (strain SL254), this protein is Bifunctional polymyxin resistance protein ArnA.